A 186-amino-acid chain; its full sequence is MDADSDVALDIIITNVVCVFRTRCHLNLRKIALEGLNVIYKREVGKVLMKLRKPRITATIWSSGKIICTGATSEEEAKVGARRLARSLQKLGFQVKFTEFKVVNVLAVCTMPFEIRLAEFTKQNRPHASYEPELHPAVCYRIKSLRTTLQIFSTGSITVTGPDVKSVATAIEQIYPFVFESRKAIL.

This sequence belongs to the TBP family.

Its subcellular location is the cytoplasm. The protein resides in the nucleus. Functionally, part of a specialized transcription system that mediates the transcription of most ribosomal proteins through the 5'-TCT-3' motif which is a core promoter element at these genes. Seems to also mediate the transcription of NF1. Does not bind the TATA box. Members of the TBP family are differentially required to regulate transcription and development during early embryogenesis. Particularly regulates genes that have a role in catabolism. The polypeptide is TATA box-binding protein-like 1 (tbpl1) (Xenopus tropicalis (Western clawed frog)).